The sequence spans 201 residues: 3-isopropylmalate dehydratase small subunit (201 aa).

It belongs to the LeuD family. LeuD type 1 subfamily. As to quaternary structure, heterodimer of LeuC and LeuD.

The enzyme catalyses (2R,3S)-3-isopropylmalate = (2S)-2-isopropylmalate. The protein operates within amino-acid biosynthesis; L-leucine biosynthesis; L-leucine from 3-methyl-2-oxobutanoate: step 2/4. Functionally, catalyzes the isomerization between 2-isopropylmalate and 3-isopropylmalate, via the formation of 2-isopropylmaleate. This chain is 3-isopropylmalate dehydratase small subunit, found in Cereibacter sphaeroides (strain KD131 / KCTC 12085) (Rhodobacter sphaeroides).